The sequence spans 662 residues: UvrABC system protein B (662 aa).

The region spanning A25–P414 is the Helicase ATP-binding domain. G38 to T45 is a binding site for ATP. The Beta-hairpin signature appears at Y91–I114. In terms of domain architecture, Helicase C-terminal spans Q430–I592. In terms of domain architecture, UVR spans K622–A657.

This sequence belongs to the UvrB family. Forms a heterotetramer with UvrA during the search for lesions. Interacts with UvrC in an incision complex.

Its subcellular location is the cytoplasm. In terms of biological role, the UvrABC repair system catalyzes the recognition and processing of DNA lesions. A damage recognition complex composed of 2 UvrA and 2 UvrB subunits scans DNA for abnormalities. Upon binding of the UvrA(2)B(2) complex to a putative damaged site, the DNA wraps around one UvrB monomer. DNA wrap is dependent on ATP binding by UvrB and probably causes local melting of the DNA helix, facilitating insertion of UvrB beta-hairpin between the DNA strands. Then UvrB probes one DNA strand for the presence of a lesion. If a lesion is found the UvrA subunits dissociate and the UvrB-DNA preincision complex is formed. This complex is subsequently bound by UvrC and the second UvrB is released. If no lesion is found, the DNA wraps around the other UvrB subunit that will check the other stand for damage. This Rickettsia typhi (strain ATCC VR-144 / Wilmington) protein is UvrABC system protein B.